We begin with the raw amino-acid sequence, 919 residues long: Plasma membrane ATPase 1 (919 aa).

Basic and acidic residues predominate over residues 1–16 (MADNAGEYHDAEKHAP). A disordered region spans residues 1 to 73 (MADNAGEYHD…APAAGEAKAV (73 aa)). The Cytoplasmic portion of the chain corresponds to 1-113 (MADNAGEYHD…KEELENPFLK (113 aa)). Residues 34-63 (QDDEPDDDIDALIEELFSEDVQEEQEDNDD) show a composition bias toward acidic residues. S89 is subject to Phosphoserine. A helical membrane pass occupies residues 114-134 (FIMFFVGPIQFVMEMAAALAA). Residues 135–138 (GLRD) lie on the Extracellular side of the membrane. A helical transmembrane segment spans residues 139 to 158 (WVDFGVICALLMLNAVVGFV). Residues 159–289 (QEYQAGSIVD…GTGHFTEVLN (131 aa)) lie on the Cytoplasmic side of the membrane. The chain crosses the membrane as a helical span at residues 290–311 (GIGTILLVLVLLTLFCIYTAAF). Topologically, residues 312–322 (YRSVRLARLLE) are extracellular. Residues 323–345 (YTLAITIIGVPVGLPAVVTTTMA) traverse the membrane as a helical segment. The Cytoplasmic portion of the chain corresponds to 346 to 717 (VGAAYLAEKQ…LIIRNQLLNL (372 aa)). The active-site 4-aspartylphosphate intermediate is the D376. S494 is subject to Phosphoserine. Residues D632 and D636 each contribute to the Mg(2+) site. A helical transmembrane segment spans residues 718 to 736 (ELVVFIAIFADVATLAIAY). Over 737 to 752 (DNAPYSMKPVKWNLPR) the chain is Extracellular. Residues 753–772 (LWGLSTVIGIVLAIGTWITN) traverse the membrane as a helical segment. At 773–824 (TTMIAQGQNRGIVQNFGVQDEVLFLEISLTENWLIFVTRCNGPFWSSIPSWQ) the chain is on the cytoplasmic side. A helical membrane pass occupies residues 825 to 845 (LSGAVLAVDILATMFCIFGWF). Over 846 to 858 (KGGHQTSIVAVLR) the chain is Extracellular. The helical transmembrane segment at 859–875 (IWMYSFGIFCIMAGTYY) threads the bilayer. Over 876–919 (ILSESAGFDRMMNGKPKESRNQRSIEDLVVALQRTSTRHEKGDA) the chain is Cytoplasmic. S899 carries the phosphoserine modification.

This sequence belongs to the cation transport ATPase (P-type) (TC 3.A.3) family. Type IIIA subfamily.

Its subcellular location is the cell membrane. The catalysed reaction is ATP + H2O + H(+)(in) = ADP + phosphate + 2 H(+)(out). In terms of biological role, the plasma membrane ATPase of plants and fungi is a hydrogen ion pump. The proton gradient it generates drives the active transport of nutrients by H(+)-symport. The resulting external acidification and/or internal alkinization may mediate growth responses. The protein is Plasma membrane ATPase 1 (pma1) of Schizosaccharomyces pombe (strain 972 / ATCC 24843) (Fission yeast).